The sequence spans 244 residues: Ribosomal RNA large subunit methyltransferase E (244 aa).

Residues Gly81, Trp83, Asp109, Asp125, and Asp149 each coordinate S-adenosyl-L-methionine. The active-site Proton acceptor is the Lys189.

It belongs to the class I-like SAM-binding methyltransferase superfamily. RNA methyltransferase RlmE family.

The protein resides in the cytoplasm. It catalyses the reaction uridine(2552) in 23S rRNA + S-adenosyl-L-methionine = 2'-O-methyluridine(2552) in 23S rRNA + S-adenosyl-L-homocysteine + H(+). In terms of biological role, specifically methylates the uridine in position 2552 of 23S rRNA at the 2'-O position of the ribose in the fully assembled 50S ribosomal subunit. This Cereibacter sphaeroides (strain ATCC 17029 / ATH 2.4.9) (Rhodobacter sphaeroides) protein is Ribosomal RNA large subunit methyltransferase E.